We begin with the raw amino-acid sequence, 183 residues long: uncharacterized protein (183 aa).

3 disordered regions span residues methionine 1–alanine 44, glycine 68–arginine 137, and arginine 163–glutamate 183.

This is an uncharacterized protein from Dryophytes versicolor (chameleon treefrog).